The following is a 439-amino-acid chain: Sex-determination protein fem-3 (439 aa).

Residues 21–45 (RRLKRKANDDDDDDETVRERVDDAE) form a disordered region.

As to quaternary structure, component of a complex containing fem-1, fem-2 and fem-3. Interacts with fem-1 and fem-2 (via N-terminus). Part of a E3 ubiquitin-protein ligase complex, at least composed of cul-2, elc-1, tra-1, fem-1, fem-2 and fem-3; mediates the ubiquitination and subsequent proteasomal degradation of tra-1. Interacts with tra-1. Interacts with sel-10. Interacts with tra-2.

Its function is as follows. Required for male development. In XO (male) animals, fem-3 directs male differentiation in all tissues. In XX (hermaphrodite) animals, it specifies the first 80 or so germ cells to be sperm. Negatively regulates male development when bound to tra-2. Together with fem-2 associates with the CBC(fem-1) E3 ubiquitin-protein ligase complex which mediates the ubiquitination and subsequent proteasomal degradation of tra-1. This chain is Sex-determination protein fem-3, found in Caenorhabditis remanei (Caenorhabditis vulgaris).